A 299-amino-acid chain; its full sequence is KATNB1-like protein 1 (299 aa).

The short motif at 8–15 is the Nuclear localization signal element; the sequence is VKKRNFSN. Phosphoserine is present on Ser56.

In terms of assembly, interacts with KATNA1 and KATNAL1; these interactions are competed by KATNB1 which has a higher affinity for them.

Its subcellular location is the nucleus. The protein resides in the cytoplasm. It is found in the cytoskeleton. It localises to the spindle pole. In terms of biological role, regulates microtubule-severing activity of KATNAL1 in a concentration-dependent manner in vitro. The sequence is that of KATNB1-like protein 1 (Katnbl1) from Mus musculus (Mouse).